Here is a 287-residue protein sequence, read N- to C-terminus: Neuferricin homolog (287 aa).

Positions 1 to 22 (MFGLLRHLFKFQFLFVVAAVLG) are cleaved as a signal peptide. Residues 61 to 146 (GTLFTPAELA…KPDDLIGLAG (86 aa)) form the Cytochrome b5 heme-binding domain. A coiled-coil region spans residues 175-204 (YHHKFLELLEQARDAKRQVEELRARYPGCN).

It belongs to the cytochrome b5 family. MAPR subfamily.

The protein resides in the secreted. Its function is as follows. Heme-binding protein. The sequence is that of Neuferricin homolog from Drosophila melanogaster (Fruit fly).